Here is a 322-residue protein sequence, read N- to C-terminus: MARDKIALIGSGQIGGTLAHLVGLKELGDVVMFDIAEGIPQGKSLDIAQSSPVDGFDAKFTGANSYEAIEGARVVIVTAGVPRKPGMSRDDLLSINLKVMEQVGAGIKKYAPDAFVICITNPLDAMVWALQKASGLPHRKVVGMAGVLDSARFRYFLADEFNVSVEDVTAFVLGGHGDTMVPLVKYSTVAGIPLPDLVKMGWTSQARLDEIVDRTRNGGAEIVNLLKTGSAFYAPAASAIAMAESYLKDKKRVVPVAAYLNGEYGVKDMYVGVPVVIGDKGVERIVEIELAGKDREAFDKSVAAVQGLVEACKKIAPELLGH.

NAD(+) contacts are provided by residues 10-15 and aspartate 34; that span reads GSGQIG. The substrate site is built by arginine 83 and arginine 89. Residues asparagine 96 and 119-121 contribute to the NAD(+) site; that span reads ITN. Positions 121 and 152 each coordinate substrate. Residue histidine 176 is the Proton acceptor of the active site.

This sequence belongs to the LDH/MDH superfamily. MDH type 3 family.

The enzyme catalyses (S)-malate + NAD(+) = oxaloacetate + NADH + H(+). Catalyzes the reversible oxidation of malate to oxaloacetate. The chain is Malate dehydrogenase 1 from Rhodopseudomonas palustris (strain BisB18).